We begin with the raw amino-acid sequence, 287 residues long: Iron-sulfur cluster carrier protein (287 aa).

47-54 (GKGGVGKS) contacts ATP.

The protein belongs to the Mrp/NBP35 ATP-binding proteins family. As to quaternary structure, homodimer.

Functionally, binds and transfers iron-sulfur (Fe-S) clusters to target apoproteins. Can hydrolyze ATP. The protein is Iron-sulfur cluster carrier protein of Pseudomonas fragi.